The following is a 475-amino-acid chain: Kynureninase (475 aa).

Pyridoxal 5'-phosphate is bound by residues leucine 141, threonine 142, 169–172 (FPSD), aspartate 254, histidine 257, and tyrosine 279. Lysine 280 carries the N6-(pyridoxal phosphate)lysine modification. Pyridoxal 5'-phosphate is bound by residues tryptophan 319 and asparagine 347.

The protein belongs to the kynureninase family. Homodimer. Requires pyridoxal 5'-phosphate as cofactor.

It localises to the cytoplasm. It catalyses the reaction L-kynurenine + H2O = anthranilate + L-alanine + H(+). It carries out the reaction 3-hydroxy-L-kynurenine + H2O = 3-hydroxyanthranilate + L-alanine + H(+). It functions in the pathway amino-acid degradation; L-kynurenine degradation; L-alanine and anthranilate from L-kynurenine: step 1/1. Its pathway is cofactor biosynthesis; NAD(+) biosynthesis; quinolinate from L-kynurenine: step 2/3. Catalyzes the cleavage of L-kynurenine (L-Kyn) and L-3-hydroxykynurenine (L-3OHKyn) into anthranilic acid (AA) and 3-hydroxyanthranilic acid (3-OHAA), respectively. The protein is Kynureninase (bna5) of Sclerotinia sclerotiorum (strain ATCC 18683 / 1980 / Ss-1) (White mold).